Reading from the N-terminus, the 1270-residue chain is Myosin-3 (1270 aa).

Positions 1–20 (MAVIKKGARRKDVKEPKKRS) are disordered. The Myosin motor domain maps to 36–715 (VGVSDLTLLS…SLFALEDMRD (680 aa)). 129–136 (GESGAGKT) contacts ATP. Position 357 is a phosphoserine (Ser357). Residues 404–486 (SIGILDIYGF…PGILAAMNDS (83 aa)) are actin-binding. 2 consecutive IQ domains span residues 719-739 (YNMA…RIDA) and 740-765 (AIKI…YGTK). In terms of domain architecture, TH1 spans 771-961 (KERRSMSLLG…TIYVRRGHPA (191 aa)). Disordered stretches follow at residues 951–1015 (STIY…QKPV), 1029–1136 (YNPK…GSSS), and 1215–1270 (VQFG…DDDW). Basic residues predominate over residues 980 to 1000 (IKSKKSKHKSTHKHTHSHRSH). Over residues 1066 to 1078 (KKASSSHKSSSAK) the composition is skewed to low complexity. Over residues 1089–1098 (GVEKNKEPLK) the composition is skewed to basic and acidic residues. The segment covering 1107–1116 (PIPPPPPPMG) has biased composition (pro residues). Residues 1118-1180 (PKDPKFEAAY…PTAYMTPYKD (63 aa)) form the SH3 domain. The span at 1215-1234 (VQFGSATVGPTSDNQSNPVG) shows a compositional bias: polar residues. Positions 1256-1270 (ADDDDNDDGDDDDDW) are enriched in acidic residues.

This sequence belongs to the TRAFAC class myosin-kinesin ATPase superfamily. Myosin family. In terms of assembly, interacts (via myosin motor domain) with SHE4; this interaction is important for proper localization and may regulate the interaction of the motor domain with actin. Interacts (via SH3 domain) with VRP1; this interaction is required for localization to sites of polarized growth and may regulate the interaction of the tail domain with actin. Interacts (via SH3 domain) with PAN1; this interaction is important for late stages of endocytopsis. Interacts (via SH3 domain) with BBC1 and LAS17. Interacts (via C-terminal acidic tail) with ARC19 and ARC40; ARC19 and ARC40 are Arp2/3 complex subunits. In terms of processing, phosphorylation of the TEDS site (Ser-357) is required for the polarization of the actin cytoskeleton and for ligand-induced, but not for constitutive internalization of STE2. Phosphorylation probably activates the myosin-I ATPase. Ser-357 is phosphorylated by CLA4 and STE20 in vitro.

It is found in the cytoplasm. The protein localises to the cytoskeleton. Its subcellular location is the actin patch. Functionally, one of two redundant type-I myosins implicated in the organization of the actin cytoskeleton. Required for proper actin cytoskeleton polarization and for the internalization step in endocytosis. At the cell cortex, assembles in patch-like structures together with proteins from the actin-polymerizing machinery and promotes actin assembly. Functions redundantly with LAS17 as actin nucleation-promoting factor (NPF) for the Arp2/3 complex. Motor domain phosphorylation by PAK kinases CLA4 and STE20 promotes CDC42-regulated actin assembly. Functions together with the NPF PAN1 in late stages of endocytosis. Motor domain phosphorylation by PDK1 kinases PKH1 and PKH2, and by SGK kinases YPK1 and YPK2, promotes ligand-induced, but not constitutive endocytosis of the G protein-coupled receptor STE2. The polypeptide is Myosin-3 (MYO3) (Saccharomyces cerevisiae (strain YJM789) (Baker's yeast)).